A 220-amino-acid polypeptide reads, in one-letter code: Large ribosomal subunit protein uL3 (220 aa).

The segment at 61–81 is disordered; it reads KGSKSNKYANKPAEGHAKKAD.

It belongs to the universal ribosomal protein uL3 family. As to quaternary structure, part of the 50S ribosomal subunit. Forms a cluster with proteins L14 and L19.

Its function is as follows. One of the primary rRNA binding proteins, it binds directly near the 3'-end of the 23S rRNA, where it nucleates assembly of the 50S subunit. The chain is Large ribosomal subunit protein uL3 from Staphylococcus epidermidis (strain ATCC 12228 / FDA PCI 1200).